Reading from the N-terminus, the 232-residue chain is Phosphatidylserine decarboxylase proenzyme (232 aa).

The active-site Schiff-base intermediate with substrate; via pyruvic acid is the Ser-190. The residue at position 190 (Ser-190) is a Pyruvic acid (Ser); by autocatalysis.

This sequence belongs to the phosphatidylserine decarboxylase family. PSD-A subfamily. Heterodimer of a large membrane-associated beta subunit and a small pyruvoyl-containing alpha subunit. Requires pyruvate as cofactor. Post-translationally, is synthesized initially as an inactive proenzyme. Formation of the active enzyme involves a self-maturation process in which the active site pyruvoyl group is generated from an internal serine residue via an autocatalytic post-translational modification. Two non-identical subunits are generated from the proenzyme in this reaction, and the pyruvate is formed at the N-terminus of the alpha chain, which is derived from the carboxyl end of the proenzyme. The post-translation cleavage follows an unusual pathway, termed non-hydrolytic serinolysis, in which the side chain hydroxyl group of the serine supplies its oxygen atom to form the C-terminus of the beta chain, while the remainder of the serine residue undergoes an oxidative deamination to produce ammonia and the pyruvoyl prosthetic group on the alpha chain.

It is found in the cell membrane. It carries out the reaction a 1,2-diacyl-sn-glycero-3-phospho-L-serine + H(+) = a 1,2-diacyl-sn-glycero-3-phosphoethanolamine + CO2. Its pathway is phospholipid metabolism; phosphatidylethanolamine biosynthesis; phosphatidylethanolamine from CDP-diacylglycerol: step 2/2. Catalyzes the formation of phosphatidylethanolamine (PtdEtn) from phosphatidylserine (PtdSer). Important for establishment of root nodule symbiosis with the host plant. In Rhizobium meliloti (strain 1021) (Ensifer meliloti), this protein is Phosphatidylserine decarboxylase proenzyme.